Consider the following 200-residue polypeptide: Recombination protein RecR (200 aa).

The segment at 60-75 adopts a C4-type zinc-finger fold; sequence CVYCQALTEDDVCNIC. The 95-residue stretch at 83 to 177 folds into the Toprim domain; that stretch reads TKLCIIESML…KISRIGFGVP (95 aa).

The protein belongs to the RecR family.

In terms of biological role, may play a role in DNA repair. It seems to be involved in an RecBC-independent recombinational process of DNA repair. It may act with RecF and RecO. The chain is Recombination protein RecR from Francisella tularensis subsp. novicida (strain U112).